The chain runs to 515 residues: Maturase K (515 aa).

Belongs to the intron maturase 2 family. MatK subfamily.

Its subcellular location is the plastid. The protein localises to the chloroplast. In terms of biological role, usually encoded in the trnK tRNA gene intron. Probably assists in splicing its own and other chloroplast group II introns. The polypeptide is Maturase K (Pinus pinea (Italian stone pine)).